The chain runs to 161 residues: Regulator of ribonuclease activity A (161 aa).

The protein belongs to the RraA family. As to quaternary structure, homotrimer. Binds to both RNA-binding sites in the C-terminal region of Rne and to RhlB.

Its subcellular location is the cytoplasm. Globally modulates RNA abundance by binding to RNase E (Rne) and regulating its endonucleolytic activity. Can modulate Rne action in a substrate-dependent manner by altering the composition of the degradosome. Modulates RNA-binding and helicase activities of the degradosome. The polypeptide is Regulator of ribonuclease activity A (Yersinia enterocolitica serotype O:8 / biotype 1B (strain NCTC 13174 / 8081)).